A 913-amino-acid chain; its full sequence is Protein translocase subunit SecA (913 aa).

ATP-binding positions include Gln-87, 105 to 109 (GEGKT), and Asp-512. Positions 897, 899, 908, and 909 each coordinate Zn(2+).

It belongs to the SecA family. In terms of assembly, monomer and homodimer. Part of the essential Sec protein translocation apparatus which comprises SecA, SecYEG and auxiliary proteins SecDF-YajC and YidC. It depends on Zn(2+) as a cofactor.

The protein localises to the cell inner membrane. Its subcellular location is the cytoplasm. It catalyses the reaction ATP + H2O + cellular proteinSide 1 = ADP + phosphate + cellular proteinSide 2.. Part of the Sec protein translocase complex. Interacts with the SecYEG preprotein conducting channel. Has a central role in coupling the hydrolysis of ATP to the transfer of proteins into and across the cell membrane, serving both as a receptor for the preprotein-SecB complex and as an ATP-driven molecular motor driving the stepwise translocation of polypeptide chains across the membrane. This Pseudomonas syringae pv. syringae (strain B728a) protein is Protein translocase subunit SecA.